A 147-amino-acid chain; its full sequence is Response regulator Rcp1 (147 aa).

Residues valine 10–glutamate 135 enclose the Response regulatory domain. Aspartate 68 bears the 4-aspartylphosphate mark.

Post-translationally, phosphorylated by Cph1.

In terms of biological role, forms a two-component system with Cph1 in which it acts as receiver substrate. The polypeptide is Response regulator Rcp1 (rcp1) (Synechocystis sp. (strain ATCC 27184 / PCC 6803 / Kazusa)).